A 151-amino-acid chain; its full sequence is Ribosome maturation factor RimP (151 aa).

The protein belongs to the RimP family.

It is found in the cytoplasm. Required for maturation of 30S ribosomal subunits. In Haemophilus influenzae (strain 86-028NP), this protein is Ribosome maturation factor RimP.